A 72-amino-acid chain; its full sequence is ATP synthase subunit c (72 aa).

The next 2 helical transmembrane spans lie at 1–21 and 49–69; these read MSLGVIAAAIAIGLSALGAGI and FIGVALVEALPIIGVVIAFIV.

It belongs to the ATPase C chain family. As to quaternary structure, F-type ATPases have 2 components, F(1) - the catalytic core - and F(0) - the membrane proton channel. F(1) has five subunits: alpha(3), beta(3), gamma(1), delta(1), epsilon(1). F(0) has three main subunits: a(1), b(2) and c(10-14). The alpha and beta chains form an alternating ring which encloses part of the gamma chain. F(1) is attached to F(0) by a central stalk formed by the gamma and epsilon chains, while a peripheral stalk is formed by the delta and b chains.

The protein resides in the cell membrane. F(1)F(0) ATP synthase produces ATP from ADP in the presence of a proton or sodium gradient. F-type ATPases consist of two structural domains, F(1) containing the extramembraneous catalytic core and F(0) containing the membrane proton channel, linked together by a central stalk and a peripheral stalk. During catalysis, ATP synthesis in the catalytic domain of F(1) is coupled via a rotary mechanism of the central stalk subunits to proton translocation. Its function is as follows. Key component of the F(0) channel; it plays a direct role in translocation across the membrane. A homomeric c-ring of between 10-14 subunits forms the central stalk rotor element with the F(1) delta and epsilon subunits. This Bacillus anthracis (strain A0248) protein is ATP synthase subunit c.